The chain runs to 194 residues: UPF0301 protein BPEN_258 (194 aa).

The protein belongs to the UPF0301 (AlgH) family.

This is UPF0301 protein BPEN_258 from Blochmanniella pennsylvanica (strain BPEN).